The chain runs to 140 residues: Large ribosomal subunit protein bL17 (140 aa).

Belongs to the bacterial ribosomal protein bL17 family. As to quaternary structure, part of the 50S ribosomal subunit. Contacts protein L32.

The sequence is that of Large ribosomal subunit protein bL17 from Rhizobium etli (strain ATCC 51251 / DSM 11541 / JCM 21823 / NBRC 15573 / CFN 42).